Here is a 249-residue protein sequence, read N- to C-terminus: Putative adhesin RC1281 (249 aa).

An N-terminal signal peptide occupies residues 1–22 (MKKLLLIAAASTALLTSGLSFA).

Functionally, adheres to biotinylated epithelial (Vero cell) proteins. This chain is Putative adhesin RC1281, found in Rickettsia conorii (strain ATCC VR-613 / Malish 7).